We begin with the raw amino-acid sequence, 1403 residues long: DNA-directed RNA polymerase subunit beta' (1403 aa).

C69, C71, C84, and C87 together coordinate Zn(2+). Positions 461, 463, and 465 each coordinate Mg(2+). Residues C818, C891, C898, and C901 each coordinate Zn(2+). The disordered stretch occupies residues 1384–1403 (LELLRNEGEDETGNEELVAE). A compositionally biased stretch (acidic residues) spans 1391 to 1403 (GEDETGNEELVAE).

The protein belongs to the RNA polymerase beta' chain family. The RNAP catalytic core consists of 2 alpha, 1 beta, 1 beta' and 1 omega subunit. When a sigma factor is associated with the core the holoenzyme is formed, which can initiate transcription. The cofactor is Mg(2+). Zn(2+) is required as a cofactor.

It catalyses the reaction RNA(n) + a ribonucleoside 5'-triphosphate = RNA(n+1) + diphosphate. In terms of biological role, DNA-dependent RNA polymerase catalyzes the transcription of DNA into RNA using the four ribonucleoside triphosphates as substrates. In Koribacter versatilis (strain Ellin345), this protein is DNA-directed RNA polymerase subunit beta'.